We begin with the raw amino-acid sequence, 152 residues long: Xanthine-guanine phosphoribosyltransferase (152 aa).

5-phospho-alpha-D-ribose 1-diphosphate is bound by residues R37–G38, R69, and D88–T96. Residue R69 coordinates GMP. D89 contributes to the Mg(2+) binding site. Guanine-binding residues include D92 and I135. Xanthine-binding residues include D92 and I135. GMP is bound by residues D92 to T96 and W134 to I135.

It belongs to the purine/pyrimidine phosphoribosyltransferase family. XGPT subfamily. In terms of assembly, homotetramer. Mg(2+) is required as a cofactor.

The protein resides in the cell inner membrane. The catalysed reaction is GMP + diphosphate = guanine + 5-phospho-alpha-D-ribose 1-diphosphate. It catalyses the reaction XMP + diphosphate = xanthine + 5-phospho-alpha-D-ribose 1-diphosphate. It carries out the reaction IMP + diphosphate = hypoxanthine + 5-phospho-alpha-D-ribose 1-diphosphate. The protein operates within purine metabolism; GMP biosynthesis via salvage pathway; GMP from guanine: step 1/1. It functions in the pathway purine metabolism; XMP biosynthesis via salvage pathway; XMP from xanthine: step 1/1. Functionally, purine salvage pathway enzyme that catalyzes the transfer of the ribosyl-5-phosphate group from 5-phospho-alpha-D-ribose 1-diphosphate (PRPP) to the N9 position of the 6-oxopurines guanine and xanthine to form the corresponding ribonucleotides GMP (guanosine 5'-monophosphate) and XMP (xanthosine 5'-monophosphate), with the release of PPi. To a lesser extent, also acts on hypoxanthine. This Escherichia fergusonii (strain ATCC 35469 / DSM 13698 / CCUG 18766 / IAM 14443 / JCM 21226 / LMG 7866 / NBRC 102419 / NCTC 12128 / CDC 0568-73) protein is Xanthine-guanine phosphoribosyltransferase.